The sequence spans 470 residues: Cyclin-B1-3 (470 aa).

It belongs to the cyclin family. Cyclin AB subfamily.

The sequence is that of Cyclin-B1-3 (CYCB1-3) from Oryza sativa subsp. japonica (Rice).